Consider the following 372-residue polypeptide: Y-box-binding protein 3 (372 aa).

The tract at residues 1–82 (MSEAGEATTT…LATAAGSEDA (82 aa)) is disordered. Ser2 is subject to N-acetylserine. Ser2 is subject to Phosphoserine. The span at 7–28 (ATTTTTTTLPQAPTEAAAAAPQ) shows a compositional bias: low complexity. Ser34 bears the Phosphoserine mark. Low complexity predominate over residues 35–79 (PVGSGAPQAAAPAPAAHVAGNPGGDAAPAATGTAAAASLATAAGS). Residues 93–157 (GTVKWFNVRN…GEKGAEAANV (65 aa)) form the CSD domain. Phosphoserine is present on residues Ser134, Ser201, Ser203, and Ser204. The tract at residues 181–372 (YYGRRRGPPR…APPTQQSSAE (192 aa)) is disordered. Residues 222-238 (QLRRPQYRPQYRQRRFP) show a composition bias toward basic residues. Arg251 carries the omega-N-methylarginine modification. Residues 314-324 (QQATSGPNQPS) show a composition bias toward polar residues. At Ser324 the chain carries Phosphoserine. Position 326 is an omega-N-methylarginine (Arg326). Positions 327 to 340 (RGYRRPYNYRRRPR) are enriched in basic residues. Phosphoserine occurs at positions 346, 369, and 370.

In terms of assembly, found in a mRNP complex with YBX2. Interacts with RRP1B. Highly expressed in skeletal muscle and heart.

The protein resides in the cytoplasm. The protein localises to the nucleus. In terms of biological role, binds to the GM-CSF promoter. Seems to act as a repressor. Also binds to full-length mRNA and to short RNA sequences containing the consensus site 5'-UCCAUCA-3'. May have a role in translation repression. The chain is Y-box-binding protein 3 (YBX3) from Homo sapiens (Human).